Here is a 312-residue protein sequence, read N- to C-terminus: MKNRTSVTDFILLGLTDNPQLQVVIFSFLFLTYVLSVTGNLTIISLTLLDSHLKTPMYFFLRNFSLEISFTSVCNPRFLISILTGDKSISYNACAAQLFFFIFLGSTEFFLLASMSYDCYVAICKPLHYTTIMSDRICYQLIISSWLAGFLVIFPPLAMGLQLDFCDSNVIDHFTCDSAPLLQISCTDTSTLELMSFILALFTLISTLILVILSYTYIIRTILRIPSAQQRKKAFSTCSSHVIVVSISYGSCIFMYVKTSAKEGVALTKGVAILNTSVAPMLNPFIYTLRNQQVKQAFKDVLRKISHKKKKH.

Residues 1 to 23 (MKNRTSVTDFILLGLTDNPQLQV) are Extracellular-facing. N-linked (GlcNAc...) asparagine glycosylation occurs at asparagine 3. A helical transmembrane segment spans residues 24-44 (VIFSFLFLTYVLSVTGNLTII). The Cytoplasmic segment spans residues 45–57 (SLTLLDSHLKTPM). A helical transmembrane segment spans residues 58 to 80 (YFFLRNFSLEISFTSVCNPRFLI). The Extracellular segment spans residues 81 to 94 (SILTGDKSISYNAC). Cysteine 94 and cysteine 176 are disulfide-bonded. The chain crosses the membrane as a helical span at residues 95–115 (AAQLFFFIFLGSTEFFLLASM). The Cytoplasmic portion of the chain corresponds to 116-142 (SYDCYVAICKPLHYTTIMSDRICYQLI). The helical transmembrane segment at 143 to 163 (ISSWLAGFLVIFPPLAMGLQL) threads the bilayer. At 164-195 (DFCDSNVIDHFTCDSAPLLQISCTDTSTLELM) the chain is on the extracellular side. A helical transmembrane segment spans residues 196–216 (SFILALFTLISTLILVILSYT). Residues 217-238 (YIIRTILRIPSAQQRKKAFSTC) are Cytoplasmic-facing. The helical transmembrane segment at 239 to 259 (SSHVIVVSISYGSCIFMYVKT) threads the bilayer. The Extracellular portion of the chain corresponds to 260 to 267 (SAKEGVAL). A helical membrane pass occupies residues 268–288 (TKGVAILNTSVAPMLNPFIYT). The Cytoplasmic segment spans residues 289–312 (LRNQQVKQAFKDVLRKISHKKKKH).

Belongs to the G-protein coupled receptor 1 family.

The protein localises to the cell membrane. Odorant receptor. The protein is Olfactory receptor 6C76 (OR6C76) of Homo sapiens (Human).